The chain runs to 448 residues: Phosphoglucosamine mutase (448 aa).

S100 (phosphoserine intermediate) is an active-site residue. Mg(2+) contacts are provided by S100, D240, D242, and D244. S100 bears the Phosphoserine mark.

The protein belongs to the phosphohexose mutase family. The cofactor is Mg(2+). In terms of processing, activated by phosphorylation.

It carries out the reaction alpha-D-glucosamine 1-phosphate = D-glucosamine 6-phosphate. Its function is as follows. Catalyzes the conversion of glucosamine-6-phosphate to glucosamine-1-phosphate. The protein is Phosphoglucosamine mutase of Geobacillus thermodenitrificans (strain NG80-2).